The following is a 612-amino-acid chain: UvrABC system protein C (612 aa).

Positions 20-98 constitute a GIY-YIG domain; it reads THSGVYRMLD…IKQHRPKYNI (79 aa). The region spanning 208–243 is the UVR domain; the sequence is SSVLEEISANMYQASEDMEYEKAQVYRDQLVVLRKL.

Belongs to the UvrC family. In terms of assembly, interacts with UvrB in an incision complex.

Its subcellular location is the cytoplasm. The UvrABC repair system catalyzes the recognition and processing of DNA lesions. UvrC both incises the 5' and 3' sides of the lesion. The N-terminal half is responsible for the 3' incision and the C-terminal half is responsible for the 5' incision. The chain is UvrABC system protein C from Francisella tularensis subsp. holarctica (strain LVS).